The chain runs to 429 residues: Glucose-6-phosphate isomerase (429 aa).

Glu282 functions as the Proton donor in the catalytic mechanism. Active-site residues include His303 and Lys418.

The protein belongs to the GPI family.

It localises to the cytoplasm. The enzyme catalyses alpha-D-glucose 6-phosphate = beta-D-fructose 6-phosphate. It participates in carbohydrate biosynthesis; gluconeogenesis. The protein operates within carbohydrate degradation; glycolysis; D-glyceraldehyde 3-phosphate and glycerone phosphate from D-glucose: step 2/4. Its function is as follows. Catalyzes the reversible isomerization of glucose-6-phosphate to fructose-6-phosphate. This is Glucose-6-phosphate isomerase from Mesomycoplasma hyopneumoniae (strain 232) (Mycoplasma hyopneumoniae).